Consider the following 166-residue polypeptide: MKNIYLVGFMGSGKSTVGKILAEKLNMKFVDIDKLIEEKEGMKIKDIFEQKGESYFRELERKQIEAIVNQEGLVVSTGGGLGANLNNMNLMKKNGDVVWLDVSLNTVLDRLKNDQDRPLLKQPIEKIKQLFEERKNVYRLANIRINADKKTPSQIVEEILTKIKRR.

Residue 11–16 participates in ATP binding; it reads GSGKST. S15 serves as a coordination point for Mg(2+). D33, R57, and G79 together coordinate substrate. R117 is an ATP binding site. Substrate is bound at residue R134.

It belongs to the shikimate kinase family. Monomer. Mg(2+) serves as cofactor.

It is found in the cytoplasm. The enzyme catalyses shikimate + ATP = 3-phosphoshikimate + ADP + H(+). Its pathway is metabolic intermediate biosynthesis; chorismate biosynthesis; chorismate from D-erythrose 4-phosphate and phosphoenolpyruvate: step 5/7. Functionally, catalyzes the specific phosphorylation of the 3-hydroxyl group of shikimic acid using ATP as a cosubstrate. In Sulfurihydrogenibium sp. (strain YO3AOP1), this protein is Shikimate kinase.